We begin with the raw amino-acid sequence, 113 residues long: Beta-microseminoprotein (113 aa).

The N-terminal stretch at 1-20 (MEAWLGSLLFLATMVIASKA) is a signal peptide. 5 disulfides stabilise this stretch: C22-C69, C38-C61, C56-C92, C59-C68, and C83-C106.

The protein belongs to the beta-microseminoprotein family. In terms of assembly, homodimer; Interacts with PI16.

It localises to the secreted. This is Beta-microseminoprotein (Msmb) from Mus musculus (Mouse).